We begin with the raw amino-acid sequence, 464 residues long: Protein ABHD18 (464 aa).

The signal sequence occupies residues 1–24 (MGVSKLDILYRRLLLTKLFIRGWG). N341 carries N-linked (GlcNAc...) asparagine glycosylation.

Belongs to the AB hydrolase superfamily.

It is found in the secreted. The chain is Protein ABHD18 from Rattus norvegicus (Rat).